The primary structure comprises 317 residues: uncharacterized protein (317 aa).

Positions 1-16 are cleaved as a signal peptide; that stretch reads MKLSFILSTLVAGALA. The N-linked (GlcNAc...) asparagine glycan is linked to Asn42. 2 stretches are compositionally biased toward low complexity: residues 150–238 and 247–259; these read SSST…SSSS and TAST…ASSA. The disordered stretch occupies residues 150–259; that stretch reads SSSTPSSSSS…TDDSSSASSA (110 aa).

This is an uncharacterized protein from Schizosaccharomyces pombe (strain 972 / ATCC 24843) (Fission yeast).